We begin with the raw amino-acid sequence, 430 residues long: UDP-N-acetylglucosamine 1-carboxyvinyltransferase (430 aa).

22–23 contributes to the phosphoenolpyruvate binding site; sequence KN. Arg-102 serves as a coordination point for UDP-N-acetyl-alpha-D-glucosamine. The active-site Proton donor is the Cys-126. Cys-126 carries the 2-(S-cysteinyl)pyruvic acid O-phosphothioketal modification. UDP-N-acetyl-alpha-D-glucosamine is bound by residues 131-135, 172-175, Asp-317, and Ile-339; these read RPVDL and KVSV.

This sequence belongs to the EPSP synthase family. MurA subfamily.

The protein localises to the cytoplasm. The catalysed reaction is phosphoenolpyruvate + UDP-N-acetyl-alpha-D-glucosamine = UDP-N-acetyl-3-O-(1-carboxyvinyl)-alpha-D-glucosamine + phosphate. Its pathway is cell wall biogenesis; peptidoglycan biosynthesis. In terms of biological role, cell wall formation. Adds enolpyruvyl to UDP-N-acetylglucosamine. The sequence is that of UDP-N-acetylglucosamine 1-carboxyvinyltransferase from Rhizobium leguminosarum bv. trifolii (strain WSM2304).